We begin with the raw amino-acid sequence, 396 residues long: MSTDQMTQLDESQIETNYDKVVYEFDDMNLNEKLLRGVFGYGFNKPSAIQQRAIMPIIEGNDVLAQAQSGTGKTGTFSIAALQRIDPAIKAPQALMLAPTRELALQIQKVVMALGFHMDIKVHACIGGTSFVEDAEGLRDAQIVVGTPGRVFDNIQRRKFKVDNIKMFILDEADEMLSTGFKEQIYQIFTMLPPTTQVVLLSATMPRDVLEVTAKFMQNPVRILVKKDELTLEGIKQFYVNVEEEQFKYDCLTDLYDSISVTQAVIFCNTRRKVEELTQRLTADNFTVSSIYSDLPQQERDTIMKEFRSGSSRILISTDLLARGIDVQQVSLVINYDLPTNKENYIHRIGRGGRFGRKGVAINFIVNEDVQALRELEQFYSTQIEELPSDIGTLFT.

The Q motif motif lies at Y23 to Q51. In terms of domain architecture, Helicase ATP-binding spans I54–I223. Position 67–74 (A67–T74) interacts with ATP. A DEAD box motif is present at residues D171–D174. One can recognise a Helicase C-terminal domain in the interval G234–F395.

It belongs to the DEAD box helicase family. eIF4A subfamily. Component of the eIF4F complex, which composition varies with external and internal environmental conditions. It is composed of at least eIF4A, eIF4E and eIF4G.

The protein localises to the cytoplasm. The enzyme catalyses ATP + H2O = ADP + phosphate + H(+). Its function is as follows. ATP-dependent RNA helicase which is a subunit of the eIF4F complex involved in cap recognition and is required for mRNA binding to ribosome. In the current model of translation initiation, eIF4A unwinds RNA secondary structures in the 5'-UTR of mRNAs which is necessary to allow efficient binding of the small ribosomal subunit, and subsequent scanning for the initiator codon. The protein is ATP-dependent RNA helicase eIF4A (TIF1) of Candida glabrata (strain ATCC 2001 / BCRC 20586 / JCM 3761 / NBRC 0622 / NRRL Y-65 / CBS 138) (Yeast).